We begin with the raw amino-acid sequence, 992 residues long: Disks large-associated protein 4 (992 aa).

Positions 1 to 20 (MKGLGDSRPRHLSDSLDPPH) are enriched in basic and acidic residues. 2 disordered regions span residues 1-31 (MKGL…DRNP) and 154-226 (APSM…ASGL). The span at 162 to 171 (GKVGGNGGKK) shows a compositional bias: gly residues. A compositionally biased stretch (basic and acidic residues) spans 172 to 194 (GVLEDGKGRRAKSKERAKAGEPK). A compositionally biased stretch (polar residues) spans 199-208 (SNISGWWSSD). Ser206 and Ser207 each carry phosphoserine. Residue Arg290 is modified to Omega-N-methylarginine. Disordered stretches follow at residues 342-435 (TTLL…SWEE), 527-665 (SVSL…RKLS), 677-751 (VPKE…GPRQ), 763-798 (SYGD…AQPG), and 915-992 (TPEK…QTRL). Ser377, Ser380, Ser384, Ser388, Ser405, Ser415, and Ser421 each carry phosphoserine. Over residues 399–413 (LRATQQSLGEQSNPR) the composition is skewed to polar residues. Residues 528–554 (VSLQSLSPPPSTGSLSNSRTLPSSSCL) are compositionally biased toward low complexity. Residues 576–591 (VTVQSSTESAQDTYLD) are compositionally biased toward polar residues. Residues Ser580, Ser581, Ser609, Ser611, Ser665, and Ser744 each carry the phosphoserine modification. Residues 600 to 620 (TSQSGLSNSSDSLDSSTRPPS) are compositionally biased toward low complexity. The residue at position 915 (Thr915) is a Phosphothreonine. Composition is skewed to basic and acidic residues over residues 915–925 (TPEKRKEEKKP) and 940–958 (VSRD…EARK). Positions 969 to 978 (VRQNSATESA) are enriched in polar residues. The residue at position 973 (Ser973) is a Phosphoserine.

The protein belongs to the SAPAP family. In terms of assembly, interacts with DLG1 and DLG4/PSD-95. Expressed in brain.

The protein localises to the membrane. May play a role in the molecular organization of synapses and neuronal cell signaling. Could be an adapter protein linking ion channel to the subsynaptic cytoskeleton. May induce enrichment of PSD-95/SAP90 at the plasma membrane. The protein is Disks large-associated protein 4 (Dlgap4) of Rattus norvegicus (Rat).